The primary structure comprises 127 residues: uncharacterized protein (127 aa).

Residues 12 to 32 (FFFLILFYFCIISSFLFLFIF) form a helical membrane-spanning segment.

The protein resides in the membrane. This is an uncharacterized protein from Saccharomyces cerevisiae (strain ATCC 204508 / S288c) (Baker's yeast).